The following is a 318-amino-acid chain: Methionyl-tRNA formyltransferase (318 aa).

(6S)-5,6,7,8-tetrahydrofolate is bound at residue 112–115 (SILP).

Belongs to the Fmt family.

It carries out the reaction L-methionyl-tRNA(fMet) + (6R)-10-formyltetrahydrofolate = N-formyl-L-methionyl-tRNA(fMet) + (6S)-5,6,7,8-tetrahydrofolate + H(+). In terms of biological role, attaches a formyl group to the free amino group of methionyl-tRNA(fMet). The formyl group appears to play a dual role in the initiator identity of N-formylmethionyl-tRNA by promoting its recognition by IF2 and preventing the misappropriation of this tRNA by the elongation apparatus. The sequence is that of Methionyl-tRNA formyltransferase from Haemophilus influenzae (strain PittGG).